The following is a 207-amino-acid chain: Large ribosomal subunit protein uL4 (207 aa).

Belongs to the universal ribosomal protein uL4 family. In terms of assembly, part of the 50S ribosomal subunit.

Its function is as follows. One of the primary rRNA binding proteins, this protein initially binds near the 5'-end of the 23S rRNA. It is important during the early stages of 50S assembly. It makes multiple contacts with different domains of the 23S rRNA in the assembled 50S subunit and ribosome. Forms part of the polypeptide exit tunnel. This chain is Large ribosomal subunit protein uL4, found in Erythrobacter litoralis (strain HTCC2594).